An 85-amino-acid polypeptide reads, in one-letter code: VDINNGESVFTANCSACHAGGNNVIMPEKTLKKDALEENEMNNIKSITYQVTNGKNAMPAFGGRLSETDIEDVANFVISQSQKGW.

Cys14, Cys17, His18, and Met58 together coordinate heme c.

Belongs to the cytochrome c family. PetJ subfamily. As to quaternary structure, monomer. Post-translationally, binds 1 heme c group covalently per subunit.

The protein localises to the plastid. It localises to the chloroplast thylakoid lumen. In terms of biological role, functions as an electron carrier between membrane-bound cytochrome b6-f and photosystem I in oxygenic photosynthesis. This chain is Cytochrome c6 (petJ), found in Petalonia fascia (False kelp).